We begin with the raw amino-acid sequence, 290 residues long: Outer dense fiber protein 4 (290 aa).

Ser28 is subject to Phosphoserine. A run of 4 helical transmembrane segments spans residues 44–64, 132–152, 164–184, and 201–221; these read AQVV…LMVF, ISFI…HLPY, LIGI…LLLF, and IGWS…CGIL. The interval 262–290 is disordered; it reads ADILDPTQDDQKPLSSDNIALPPNPDTTD.

The protein resides in the membrane. Its function is as follows. Component of the outer dense fibers (ODF) of spermatozoa which could be involved in sperm tail structure, sperm movement and general organization of cellular cytoskeleton. This chain is Outer dense fiber protein 4 (Odf4), found in Rattus norvegicus (Rat).